The chain runs to 186 residues: MKIIAVTGYKPFELGIFKQDEPALQYIKAELQKRLTALIEDGLEWVLISGQLGAEIWTAEVVFELQEEYPALKLAVITPFYDQEERWNEQNKELYEGILAQADFVESVTHRPYESPAQFKQKNRFFIEKTDGLLALYDPEHDGSPKYMIKEAENYTDYPIMYITMDDLRAQVEAEDPFFDEKQEKI.

Belongs to the UPF0398 family.

This chain is UPF0398 protein BPUM_1952, found in Bacillus pumilus (strain SAFR-032).